The primary structure comprises 234 residues: 1-(5-phosphoribosyl)-5-[(5-phosphoribosylamino)methylideneamino] imidazole-4-carboxamide isomerase (234 aa).

Asp9 (proton acceptor) is an active-site residue. The active-site Proton donor is the Asp131.

Belongs to the HisA/HisF family.

Its subcellular location is the cytoplasm. It catalyses the reaction 1-(5-phospho-beta-D-ribosyl)-5-[(5-phospho-beta-D-ribosylamino)methylideneamino]imidazole-4-carboxamide = 5-[(5-phospho-1-deoxy-D-ribulos-1-ylimino)methylamino]-1-(5-phospho-beta-D-ribosyl)imidazole-4-carboxamide. It participates in amino-acid biosynthesis; L-histidine biosynthesis; L-histidine from 5-phospho-alpha-D-ribose 1-diphosphate: step 4/9. The sequence is that of 1-(5-phosphoribosyl)-5-[(5-phosphoribosylamino)methylideneamino] imidazole-4-carboxamide isomerase from Staphylococcus epidermidis (strain ATCC 12228 / FDA PCI 1200).